The primary structure comprises 357 residues: DNA primase small subunit PriS (357 aa).

Active-site residues include D105, D107, and D259.

Belongs to the eukaryotic-type primase small subunit family. Heterodimer of a small subunit (PriS) and a large subunit (PriL). It depends on Mg(2+) as a cofactor. Mn(2+) is required as a cofactor.

Its function is as follows. Catalytic subunit of DNA primase, an RNA polymerase that catalyzes the synthesis of short RNA molecules used as primers for DNA polymerase during DNA replication. The small subunit contains the primase catalytic core and has DNA synthesis activity on its own. Binding to the large subunit stabilizes and modulates the activity, increasing the rate of DNA synthesis while decreasing the length of the DNA fragments, and conferring RNA synthesis capability. The DNA polymerase activity may enable DNA primase to also catalyze primer extension after primer synthesis. May also play a role in DNA repair. The chain is DNA primase small subunit PriS from Methanococcus maripaludis (strain C5 / ATCC BAA-1333).